Reading from the N-terminus, the 430-residue chain is Tol-Pal system protein TolB (430 aa).

A signal peptide spans 1 to 26 (MSLMTKLGLRTLVASCLIAVGGAAHA).

It belongs to the TolB family. As to quaternary structure, the Tol-Pal system is composed of five core proteins: the inner membrane proteins TolA, TolQ and TolR, the periplasmic protein TolB and the outer membrane protein Pal. They form a network linking the inner and outer membranes and the peptidoglycan layer.

The protein resides in the periplasm. Its function is as follows. Part of the Tol-Pal system, which plays a role in outer membrane invagination during cell division and is important for maintaining outer membrane integrity. The protein is Tol-Pal system protein TolB of Paraburkholderia phytofirmans (strain DSM 17436 / LMG 22146 / PsJN) (Burkholderia phytofirmans).